We begin with the raw amino-acid sequence, 156 residues long: Small ribosomal subunit protein uS7 (156 aa).

Belongs to the universal ribosomal protein uS7 family. Part of the 30S ribosomal subunit. Contacts proteins S9 and S11.

In terms of biological role, one of the primary rRNA binding proteins, it binds directly to 16S rRNA where it nucleates assembly of the head domain of the 30S subunit. Is located at the subunit interface close to the decoding center, probably blocks exit of the E-site tRNA. This Hamiltonella defensa subsp. Acyrthosiphon pisum (strain 5AT) protein is Small ribosomal subunit protein uS7.